The primary structure comprises 828 residues: Glycerol-3-phosphate acyltransferase (828 aa).

The HXXXXD motif motif lies at 309–314; sequence CHRSHI.

The protein belongs to the GPAT/DAPAT family.

The protein resides in the cell inner membrane. It catalyses the reaction sn-glycerol 3-phosphate + an acyl-CoA = a 1-acyl-sn-glycero-3-phosphate + CoA. The protein operates within phospholipid metabolism; CDP-diacylglycerol biosynthesis; CDP-diacylglycerol from sn-glycerol 3-phosphate: step 1/3. In Pseudomonas putida (strain W619), this protein is Glycerol-3-phosphate acyltransferase.